We begin with the raw amino-acid sequence, 181 residues long: Endoribonuclease YbeY (181 aa).

Residues H120, H124, and H130 each contribute to the Zn(2+) site. Residues 157–181 (AGGKRPAGGADGADGAGEPGPTAAR) form a disordered region. Gly residues predominate over residues 161 to 174 (RPAGGADGADGAGE).

Belongs to the endoribonuclease YbeY family. Requires Zn(2+) as cofactor.

Its subcellular location is the cytoplasm. In terms of biological role, single strand-specific metallo-endoribonuclease involved in late-stage 70S ribosome quality control and in maturation of the 3' terminus of the 16S rRNA. This Frankia alni (strain DSM 45986 / CECT 9034 / ACN14a) protein is Endoribonuclease YbeY.